The primary structure comprises 690 residues: Eukaryotic translation initiation factor 3 subunit B (690 aa).

A compositionally biased stretch (basic and acidic residues) spans 1-11 (MAKKKSEEHSS). The disordered stretch occupies residues 1–33 (MAKKKSEEHSSADANDSDYQEEPNFDDPPNFVD). The span at 15–25 (NDSDYQEEPNF) shows a compositional bias: acidic residues. An RRM domain is found at 57-141 (SVVVVDNIPK…HTFAVNLFTD (85 aa)). WD repeat units lie at residues 207–246 (TRER…KIQK), 293–331 (DGMS…LLDL), 334–369 (IKIP…TLME), 442–484 (EIRE…KPSL), and 530–575 (PDHF…IKRT). The stretch at 614–645 (QKDRLRLTRASKELLEKRSQLRETFMEYRNKR) forms a coiled coil.

This sequence belongs to the eIF-3 subunit B family. As to quaternary structure, component of the eukaryotic translation initiation factor 3 (eIF-3) complex. The eIF-3 complex interacts with pix. Interacts with mxt.

The protein localises to the cytoplasm. RNA-binding component of the eukaryotic translation initiation factor 3 (eIF-3) complex, which is involved in protein synthesis of a specialized repertoire of mRNAs and, together with other initiation factors, stimulates binding of mRNA and methionyl-tRNAi to the 40S ribosome. The eIF-3 complex specifically targets and initiates translation of a subset of mRNAs involved in cell proliferation. This chain is Eukaryotic translation initiation factor 3 subunit B, found in Drosophila willistoni (Fruit fly).